A 150-amino-acid chain; its full sequence is 3-hydroxyacyl-[acyl-carrier-protein] dehydratase FabZ (150 aa).

His54 is an active-site residue.

The protein belongs to the thioester dehydratase family. FabZ subfamily.

The protein localises to the cytoplasm. It carries out the reaction a (3R)-hydroxyacyl-[ACP] = a (2E)-enoyl-[ACP] + H2O. Its function is as follows. Involved in unsaturated fatty acids biosynthesis. Catalyzes the dehydration of short chain beta-hydroxyacyl-ACPs and long chain saturated and unsaturated beta-hydroxyacyl-ACPs. In Chromobacterium violaceum (strain ATCC 12472 / DSM 30191 / JCM 1249 / CCUG 213 / NBRC 12614 / NCIMB 9131 / NCTC 9757 / MK), this protein is 3-hydroxyacyl-[acyl-carrier-protein] dehydratase FabZ.